Consider the following 974-residue polypeptide: Bifunctional glutamine synthetase adenylyltransferase/adenylyl-removing enzyme (974 aa).

The segment at 1–464 (MKNAFLKTQL…HYAALFENEQ (464 aa)) is adenylyl removase. Residues 468–974 (LEIGNLVFTG…YSIFKQVMKY (507 aa)) are adenylyl transferase.

It belongs to the GlnE family. Mg(2+) is required as a cofactor.

It catalyses the reaction [glutamine synthetase]-O(4)-(5'-adenylyl)-L-tyrosine + phosphate = [glutamine synthetase]-L-tyrosine + ADP. The catalysed reaction is [glutamine synthetase]-L-tyrosine + ATP = [glutamine synthetase]-O(4)-(5'-adenylyl)-L-tyrosine + diphosphate. Involved in the regulation of glutamine synthetase GlnA, a key enzyme in the process to assimilate ammonia. When cellular nitrogen levels are high, the C-terminal adenylyl transferase (AT) inactivates GlnA by covalent transfer of an adenylyl group from ATP to specific tyrosine residue of GlnA, thus reducing its activity. Conversely, when nitrogen levels are low, the N-terminal adenylyl removase (AR) activates GlnA by removing the adenylyl group by phosphorolysis, increasing its activity. The regulatory region of GlnE binds the signal transduction protein PII (GlnB) which indicates the nitrogen status of the cell. The protein is Bifunctional glutamine synthetase adenylyltransferase/adenylyl-removing enzyme of Bartonella henselae (strain ATCC 49882 / DSM 28221 / CCUG 30454 / Houston 1) (Rochalimaea henselae).